Reading from the N-terminus, the 136-residue chain is Large ribosomal subunit protein uL16 (136 aa).

It belongs to the universal ribosomal protein uL16 family. In terms of assembly, part of the 50S ribosomal subunit.

In terms of biological role, binds 23S rRNA and is also seen to make contacts with the A and possibly P site tRNAs. This chain is Large ribosomal subunit protein uL16, found in Shewanella baltica (strain OS155 / ATCC BAA-1091).